The primary structure comprises 272 residues: MSASGEISTPQEYIGHHLNNLQLDMRTFELVNHHTASSFWVLNIDSMFFSLLLGAIFLLIFGRVAKGATSGVPGKMQTFVELVVGFVDGSVRDMFHGKSKLIAPLALTIFVWVFLMNLMDLLPIDLLPYLGEHVLGLPALRVVPSADVNITLSMALGVFILILYYSVMMKGIGGFVKELTLQPFNHPIFIPVNLILEGVSLLSKPVSLGLRLFGNMYAGELIFILIAGLLPWWSQWILNVPWAIFHILIITLQAFIFMVLTIVYLAMASEEH.

5 helical membrane passes run 41–61, 101–121, 143–165, 221–241, and 243–263; these read VLNIDSMFFSLLLGAIFLLIF, LIAPLALTIFVWVFLMNLMDL, VPSADVNITLSMALGVFILILYY, LIFILIAGLLPWWSQWILNVP, and AIFHILIITLQAFIFMVLTIV.

The protein belongs to the ATPase A chain family. As to quaternary structure, F-type ATPases have 2 components, CF(1) - the catalytic core - and CF(0) - the membrane proton channel. CF(1) has five subunits: alpha(3), beta(3), gamma(1), delta(1), epsilon(1). CF(0) has three main subunits: a(1), b(2) and c(9-12). The alpha and beta chains form an alternating ring which encloses part of the gamma chain. CF(1) is attached to CF(0) by a central stalk formed by the gamma and epsilon chains, while a peripheral stalk is formed by the delta and b chains.

Its subcellular location is the cell inner membrane. Its function is as follows. Key component of the proton channel; it plays a direct role in the translocation of protons across the membrane. In Sodalis glossinidius (strain morsitans), this protein is ATP synthase subunit a.